Here is a 719-residue protein sequence, read N- to C-terminus: Forkhead box protein K1 (719 aa).

Position 2 is an N-acetylalanine (A2). The segment at 2-40 (AEVGEDSGARALLALRSAPCSPVLCAAAAAAAFPATTSP) is interaction with SIN3A and SIN3B. The segment at 35 to 67 (PATTSPPPPAQPPPGPPALPAEPGPGPVPSTVA) is disordered. The segment covering 38-62 (TSPPPPAQPPPGPPALPAEPGPGPV) has biased composition (pro residues). Residues 81 to 406 (AASVRQSPGP…PLSSRSAPAS (326 aa)) are required for interaction with FOXO4 and MEF2C. Phosphoserine is present on S87. The 53-residue stretch at 109-161 (VTIGRNSSQGSVDLSMGLSSFISRRHLQLSFQEPHFYLRCLGKNGVFVDGAFQ) folds into the FHA domain. An omega-N-methylarginine mark is found at R147 and R177. A phosphoserine mark is found at S199, S209, S225, and S229. Phosphothreonine is present on residues T231 and T233. S239, S243, S281, and S285 each carry phosphoserine. Positions 291 to 386 (KPPYSYAQLI…EQAFRKRRQR (96 aa)) form a DNA-binding region, fork-head. The segment at 399 to 443 (SSRSAPASPTHPGLMSPRSSGLQTPECLSREGSPIPHDPDLGSKL) is disordered. A phosphoserine mark is found at S402 and S406. Phosphothreonine is present on T408. Position 414 is a phosphoserine (S414). Position 422 is a phosphothreonine (T422). A phosphoserine mark is found at S427, S431, and S445. The span at 665–685 (AANAAPTPAASTTTSASSSGE) shows a compositional bias: low complexity. The interval 665–719 (AANAAPTPAASTTTSASSSGEPEVKRSRVEEPGGTATTQPTAMAATGPQGPGTGE) is disordered. Over residues 686 to 695 (PEVKRSRVEE) the composition is skewed to basic and acidic residues. The segment covering 696-712 (PGGTATTQPTAMAATGP) has biased composition (low complexity).

In terms of assembly, interacts with SIN3A and SIN3B (via PAH2) to form a complex which represses transcription. Component of SIN3A-, but not SIN3B-, containing multiprotein complexes. Interacts with FOXO4 and MEF2C; both interactions inhibit FOXO4 and MEF2C transactivation activity. Interacts (when phosphorylated) with YWHAE/14-3-3-epsilon; promotes sequestration in the cytoplasm and leads to impaired ability to bind DNA. Interacts with FHL2. Interacts with SRF. Interacts with DVL2 and DVL3; the interaction induces DVL2 nuclear translocation. Interacts with BAP1 (when phosphorylated). Accessory component of the polycomb repressive deubiquitinase (PR-DUB) complex, at least composed of BAP1, one of ASXL1, ASXL2 or (probably) ASXL3 and one of MBD5 or MBD6. The PR-DUB core associates with a number of accessory proteins, including FOXK1, FOXK2, KDM1B, HCFC1 and OGT. Phosphorylation by GSK3 (GSK3A or GSK3B) promotes interaction with YWHAE/14-3-3-epsilon and retention in the cytoplasm. In response to mTORC1 signaling, phosphorylation by GSK3 is prevented, leading to translocation to the nucleus. In terms of tissue distribution, expressed in tissues and cells in which the myoglobin gene is transcriptionally active including cardiac and skeletal myocytes, brain and kidney. In the adult brain, expressed in the piriform cortex and the indusium griseum. In the hippocampus, expression is localized to the dentate gyrus and CA3 area. In the cerebellum, expression is confined to the Purkinje cell layer. Present in neuroretinal cells: expressed in rod bipolar cells, amacrine cells and ganglion cells (at protein level).

The protein resides in the nucleus. Its subcellular location is the cytoplasm. In terms of biological role, transcriptional regulator involved in different processes such as glucose metabolism, aerobic glycolysis, muscle cell differentiation and autophagy. Recognizes and binds the forkhead DNA sequence motif (5'-GTAAACA-3') and can both act as a transcription activator or repressor, depending on the context. Together with FOXK2, acts as a key regulator of metabolic reprogramming towards aerobic glycolysis, a process in which glucose is converted to lactate in the presence of oxygen. Acts by promoting expression of enzymes for glycolysis (such as hexokinase-2 (HK2), phosphofructokinase, pyruvate kinase (PKLR) and lactate dehydrogenase), while suppressing further oxidation of pyruvate in the mitochondria by up-regulating pyruvate dehydrogenase kinases PDK1 and PDK4. Probably plays a role in gluconeogenesis during overnight fasting, when lactate from white adipose tissue and muscle is the main substrate. Involved in mTORC1-mediated metabolic reprogramming: in response to mTORC1 signaling, translocates into the nucleus and regulates the expression of genes associated with glycolysis and downstream anabolic pathways, such as HIF1A, thereby regulating glucose metabolism. Together with FOXK2, acts as a negative regulator of autophagy in skeletal muscle: in response to starvation, enters the nucleus, binds the promoters of autophagy genes and represses their expression, preventing proteolysis of skeletal muscle proteins. Acts as a transcriptional regulator of the myogenic progenitor cell population in skeletal muscle. Binds to the upstream enhancer region (CCAC box) of myoglobin (MB) gene, regulating the myogenic progenitor cell population. Promotes muscle progenitor cell proliferation by repressing the transcriptional activity of FOXO4, thereby inhibiting myogenic differentiation. Involved in remodeling processes of adult muscles that occur in response to physiological stimuli. Required to correct temporal orchestration of molecular and cellular events necessary for muscle repair. Represses myogenic differentiation by inhibiting MEFC activity. Positively regulates Wnt/beta-catenin signaling by translocating DVL into the nucleus. Reduces virus replication, probably by binding the interferon stimulated response element (ISRE) to promote antiviral gene expression. Accessory component of the polycomb repressive deubiquitinase (PR-DUB) complex; recruits the PR-DUB complex to specific FOXK1-bound genes. The sequence is that of Forkhead box protein K1 from Mus musculus (Mouse).